The chain runs to 164 residues: UPF0304 protein YfbU (164 aa).

It belongs to the UPF0304 family.

This is UPF0304 protein YfbU from Escherichia coli O139:H28 (strain E24377A / ETEC).